We begin with the raw amino-acid sequence, 568 residues long: MTLRLSRRAYAEMFGPTTGDRVRLADTELLIEIERDYTIYGEEVKFGGGKVIRDGMGQSQRVAADVPDTIITNAVILDHWGIVKADIAIKHGRIAAIGKAGNPDIQPGVTIAIGAATEVIAGEGLIVTAGGIDTHIHFISPQQIDEALASGVTTMLGGGTGPATGTNATTCTPGPWHMERMLQAADGWPINLGFLGKGNVSVPQPLVEQIAAGAIGLKLHEDWGTTPAAIDNCLSVADDTDTQVAIHTDTLNEGGFVESTVAAFKGRTIHTYHTEGAGGGHAPDILKVCGESNVLPSSTNPTRPYTINTLDEHLDMLMVCHHLDPSIAEDLAFAESRIRRETIAAEDILHDLGALSMLSSDSQAMGRVGEVIIRTWQTAHKMKVQRGALPEDNARNDNFRAKRYVAKYTINPAITHGIAHEVGSIEPGKWADLVLWEPAFFGIKPSMILKGGMIAMAQMGDPNASIPTPQPVHYREMFATRGGALARTSLTFVSQMAADAGIAERYGLAKWIVPVRNCRNVTKADMIHNAWRPSISVDPETYDVIADGQLLTCEPATVLPMAQRYFLF.

Residues 130–568 (GGIDTHIHFI…LPMAQRYFLF (439 aa)) form the Urease domain. Residues H135, H137, and K218 each coordinate Ni(2+). N6-carboxylysine is present on K218. H220 is a substrate binding site. Ni(2+) is bound by residues H247 and H273. The Proton donor role is filled by H321. A Ni(2+)-binding site is contributed by D361.

It belongs to the metallo-dependent hydrolases superfamily. Urease alpha subunit family. As to quaternary structure, heterotrimer of UreA (gamma), UreB (beta) and UreC (alpha) subunits. Three heterotrimers associate to form the active enzyme. It depends on Ni cation as a cofactor. Carboxylation allows a single lysine to coordinate two nickel ions.

Its subcellular location is the cytoplasm. It carries out the reaction urea + 2 H2O + H(+) = hydrogencarbonate + 2 NH4(+). Its pathway is nitrogen metabolism; urea degradation; CO(2) and NH(3) from urea (urease route): step 1/1. This Burkholderia vietnamiensis (strain G4 / LMG 22486) (Burkholderia cepacia (strain R1808)) protein is Urease subunit alpha.